The sequence spans 160 residues: Protein-export protein SecB (160 aa).

The protein belongs to the SecB family. Homotetramer, a dimer of dimers. One homotetramer interacts with 1 SecA dimer.

It localises to the cytoplasm. In terms of biological role, one of the proteins required for the normal export of preproteins out of the cell cytoplasm. It is a molecular chaperone that binds to a subset of precursor proteins, maintaining them in a translocation-competent state. It also specifically binds to its receptor SecA. This is Protein-export protein SecB from Orientia tsutsugamushi (strain Boryong) (Rickettsia tsutsugamushi).